We begin with the raw amino-acid sequence, 62 residues long: Photosystem II reaction center protein Z (62 aa).

The next 2 helical transmembrane spans lie at 8 to 28 (AVFALIATSLILLISVPVVFA) and 41 to 61 (FSGTSLWIGLVFLVAILNSLI).

Belongs to the PsbZ family. PSII is composed of 1 copy each of membrane proteins PsbA, PsbB, PsbC, PsbD, PsbE, PsbF, PsbH, PsbI, PsbJ, PsbK, PsbL, PsbM, PsbT, PsbY, PsbZ, Psb30/Ycf12, at least 3 peripheral proteins of the oxygen-evolving complex and a large number of cofactors. It forms dimeric complexes.

The protein resides in the plastid. Its subcellular location is the chloroplast thylakoid membrane. Functionally, may control the interaction of photosystem II (PSII) cores with the light-harvesting antenna, regulates electron flow through the 2 photosystem reaction centers. PSII is a light-driven water plastoquinone oxidoreductase, using light energy to abstract electrons from H(2)O, generating a proton gradient subsequently used for ATP formation. The sequence is that of Photosystem II reaction center protein Z from Phalaenopsis aphrodite subsp. formosana (Moth orchid).